Consider the following 132-residue polypeptide: Holo-[acyl-carrier-protein] synthase (132 aa).

Mg(2+)-binding residues include D8 and E57.

Belongs to the P-Pant transferase superfamily. AcpS family. It depends on Mg(2+) as a cofactor.

The protein resides in the cytoplasm. It catalyses the reaction apo-[ACP] + CoA = holo-[ACP] + adenosine 3',5'-bisphosphate + H(+). Its function is as follows. Transfers the 4'-phosphopantetheine moiety from coenzyme A to a Ser of acyl-carrier-protein. This chain is Holo-[acyl-carrier-protein] synthase, found in Methylobacterium nodulans (strain LMG 21967 / CNCM I-2342 / ORS 2060).